The following is an 825-amino-acid chain: NT-3 growth factor receptor (825 aa).

An N-terminal signal peptide occupies residues methionine 1 to alanine 31. Intrachain disulfides connect cysteine 32–cysteine 38 and cysteine 36–cysteine 45. Residues cysteine 32–threonine 429 lie on the Extracellular side of the membrane. Asparagine 68, asparagine 72, and asparagine 79 each carry an N-linked (GlcNAc...) asparagine glycan. 2 LRR repeats span residues glycine 104–lysine 125 and histidine 128–threonine 149. Asparagine 133 and asparagine 163 each carry an N-linked (GlcNAc...) asparagine glycan. Residues asparagine 160–leucine 209 enclose the LRRCT domain. Intrachain disulfides connect cysteine 164–cysteine 189 and cysteine 166–cysteine 207. Residues asparagine 203, asparagine 218, asparagine 232, asparagine 259, asparagine 267, asparagine 272, and asparagine 294 are each glycosylated (N-linked (GlcNAc...) asparagine). Ig-like C2-type domains lie at proline 210–threonine 300 and serine 309–asparagine 382. A disulfide bridge connects residues cysteine 231 and cysteine 284. Cysteines 320 and 362 form a disulfide. Asparagine 375 and asparagine 388 each carry an N-linked (GlcNAc...) asparagine glycan. The helical transmembrane segment at phenylalanine 430–isoleucine 453 threads the bilayer. Topologically, residues asparagine 454 to glycine 825 are cytoplasmic. A Phosphoserine modification is found at serine 493. Tyrosine 516 carries the phosphotyrosine; by autocatalysis modification. A Protein kinase domain is found at isoleucine 538–glycine 825. ATP is bound by residues leucine 544–valine 552 and lysine 572. Aspartate 679 acts as the Proton acceptor in catalysis. Residues tyrosine 705, tyrosine 709, and tyrosine 710 each carry the phosphotyrosine; by autocatalysis modification.

Belongs to the protein kinase superfamily. Tyr protein kinase family. Insulin receptor subfamily. As to quaternary structure, exists in a dynamic equilibrium between monomeric (low affinity) and dimeric (high affinity) structures. Binds SH2B2. Interacts with SQSTM1 and KIDINS220. Interacts with PTPRS. Interacts with MAPK8IP3/JIP3. Ligand-mediated auto-phosphorylation.

Its subcellular location is the membrane. It carries out the reaction L-tyrosyl-[protein] + ATP = O-phospho-L-tyrosyl-[protein] + ADP + H(+). In terms of biological role, receptor tyrosine kinase involved in nervous system and probably heart development. Upon binding of its ligand NTF3/neurotrophin-3, NTRK3 autophosphorylates and activates different signaling pathways, including the phosphatidylinositol 3-kinase/AKT and the MAPK pathways, that control cell survival and differentiation. The protein is NT-3 growth factor receptor (NTRK3) of Saimiri boliviensis boliviensis (Bolivian squirrel monkey).